Here is a 295-residue protein sequence, read N- to C-terminus: F-box only protein 8 (295 aa).

Positions 35-80 constitute an F-box domain; sequence TWVARYIPQDLLIEILTRLPPKSVMRFKCVSKFWSSLLSSRYFCNR.

The protein is F-box only protein 8 (FBX8) of Arabidopsis thaliana (Mouse-ear cress).